We begin with the raw amino-acid sequence, 88 residues long: Centromere protein W (88 aa).

Belongs to the CENP-W/WIP1 family. In terms of assembly, heterodimer with CENPT; this dimer coassembles with CENPS-CENPX heterodimers at centromeres to form the tetrameric CENP-T-W-S-X complex, which is a subcomplex of the large constitutive centromere-associated network (CCAN, also known as the interphase centromere complex or ICEN). Interacts with NPM1. In terms of tissue distribution, highly expressed in ovary, liver, lung and pancreas and to a lower extent in breast and gastrointestinal tract cancers; such as those of the colon, rectum and stomach. Overexpressed in high grade breast invasive tumors. Expressed in many cancer cell types.

Its subcellular location is the nucleus. It is found in the chromosome. The protein localises to the centromere. The protein resides in the kinetochore. It localises to the nucleus matrix. Its subcellular location is the nucleolus. Its function is as follows. Component of the CENPA-NAC (nucleosome-associated) complex, a complex that plays a central role in assembly of kinetochore proteins, mitotic progression and chromosome segregation. The CENPA-NAC complex recruits the CENPA-CAD (nucleosome distal) complex and may be involved in incorporation of newly synthesized CENPA into centromeres. Part of a nucleosome-associated complex that binds specifically to histone H3-containing nucleosomes at the centromere, as opposed to nucleosomes containing CENPA. Component of the heterotetrameric CENP-T-W-S-X complex that binds and supercoils DNA, and plays an important role in kinetochore assembly. CENPW has a fundamental role in kinetochore assembly and function. It is one of the inner kinetochore proteins, with most further proteins binding downstream. Required for normal chromosome organization and normal progress through mitosis. This chain is Centromere protein W (CENPW), found in Homo sapiens (Human).